Here is a 172-residue protein sequence, read N- to C-terminus: MEKMYNVGKIVNTHGLIGEIRVIATTDFPEERFQVGNTVYLFEKNSKKPEKLIIRSHRKHKNFDLLMFEGFTGIHQVERMKEGVLKIKEAQLTDLEENEFYFHEIIGCIVVTTDGKELGEITEILTPGANDVWVVKGSDKKEKLIPYIADVVKEININDKKITIEVMEGLLD.

The PRC barrel domain maps to 96 to 170 (EENEFYFHEI…KITIEVMEGL (75 aa)).

Belongs to the RimM family. In terms of assembly, binds ribosomal protein uS19.

Its subcellular location is the cytoplasm. Functionally, an accessory protein needed during the final step in the assembly of 30S ribosomal subunit, possibly for assembly of the head region. Essential for efficient processing of 16S rRNA. May be needed both before and after RbfA during the maturation of 16S rRNA. It has affinity for free ribosomal 30S subunits but not for 70S ribosomes. This chain is Ribosome maturation factor RimM, found in Listeria monocytogenes serotype 4b (strain CLIP80459).